A 347-amino-acid chain; its full sequence is Phosphoribosylformylglycinamidine cyclo-ligase (347 aa).

This sequence belongs to the AIR synthase family.

The protein localises to the cytoplasm. The catalysed reaction is 2-formamido-N(1)-(5-O-phospho-beta-D-ribosyl)acetamidine + ATP = 5-amino-1-(5-phospho-beta-D-ribosyl)imidazole + ADP + phosphate + H(+). It participates in purine metabolism; IMP biosynthesis via de novo pathway; 5-amino-1-(5-phospho-D-ribosyl)imidazole from N(2)-formyl-N(1)-(5-phospho-D-ribosyl)glycinamide: step 2/2. This is Phosphoribosylformylglycinamidine cyclo-ligase from Prochlorococcus marinus (strain MIT 9301).